Reading from the N-terminus, the 217-residue chain is Thiamine-phosphate synthase (217 aa).

4-amino-2-methyl-5-(diphosphooxymethyl)pyrimidine contacts are provided by residues 39 to 43 and Asn71; that span reads QYRDK. Asp72 and Asp91 together coordinate Mg(2+). Thr110 provides a ligand contact to 4-amino-2-methyl-5-(diphosphooxymethyl)pyrimidine. 137 to 139 is a 2-[(2R,5Z)-2-carboxy-4-methylthiazol-5(2H)-ylidene]ethyl phosphate binding site; it reads SHT. Lys140 lines the 4-amino-2-methyl-5-(diphosphooxymethyl)pyrimidine pocket. Gly167 provides a ligand contact to 2-[(2R,5Z)-2-carboxy-4-methylthiazol-5(2H)-ylidene]ethyl phosphate.

Belongs to the thiamine-phosphate synthase family. The cofactor is Mg(2+).

The catalysed reaction is 2-[(2R,5Z)-2-carboxy-4-methylthiazol-5(2H)-ylidene]ethyl phosphate + 4-amino-2-methyl-5-(diphosphooxymethyl)pyrimidine + 2 H(+) = thiamine phosphate + CO2 + diphosphate. It catalyses the reaction 2-(2-carboxy-4-methylthiazol-5-yl)ethyl phosphate + 4-amino-2-methyl-5-(diphosphooxymethyl)pyrimidine + 2 H(+) = thiamine phosphate + CO2 + diphosphate. It carries out the reaction 4-methyl-5-(2-phosphooxyethyl)-thiazole + 4-amino-2-methyl-5-(diphosphooxymethyl)pyrimidine + H(+) = thiamine phosphate + diphosphate. It participates in cofactor biosynthesis; thiamine diphosphate biosynthesis; thiamine phosphate from 4-amino-2-methyl-5-diphosphomethylpyrimidine and 4-methyl-5-(2-phosphoethyl)-thiazole: step 1/1. Functionally, condenses 4-methyl-5-(beta-hydroxyethyl)thiazole monophosphate (THZ-P) and 2-methyl-4-amino-5-hydroxymethyl pyrimidine pyrophosphate (HMP-PP) to form thiamine monophosphate (TMP). In Alcanivorax borkumensis (strain ATCC 700651 / DSM 11573 / NCIMB 13689 / SK2), this protein is Thiamine-phosphate synthase.